The sequence spans 367 residues: Holliday junction branch migration complex subunit RuvB (367 aa).

Positions 2-196 are large ATPase domain (RuvB-L); the sequence is TDEPLTDRPP…FGFTARLDFY (195 aa). ATP-binding positions include leucine 35, arginine 36, glycine 77, lysine 80, threonine 81, threonine 82, 143–145, arginine 186, tyrosine 196, and arginine 233; that span reads EDF. Threonine 81 serves as a coordination point for Mg(2+). Residues 197 to 267 are small ATPAse domain (RuvB-S); sequence EPADLERIVH…VAQAALAVYE (71 aa). Residues 270–367 are head domain (RuvB-H); that stretch reads EHGLDRLDRA…IDRDAGEPTA (98 aa). The DNA site is built by arginine 325 and arginine 330.

The protein belongs to the RuvB family. As to quaternary structure, homohexamer. Forms an RuvA(8)-RuvB(12)-Holliday junction (HJ) complex. HJ DNA is sandwiched between 2 RuvA tetramers; dsDNA enters through RuvA and exits via RuvB. An RuvB hexamer assembles on each DNA strand where it exits the tetramer. Each RuvB hexamer is contacted by two RuvA subunits (via domain III) on 2 adjacent RuvB subunits; this complex drives branch migration. In the full resolvosome a probable DNA-RuvA(4)-RuvB(12)-RuvC(2) complex forms which resolves the HJ.

Its subcellular location is the cytoplasm. It catalyses the reaction ATP + H2O = ADP + phosphate + H(+). The RuvA-RuvB-RuvC complex processes Holliday junction (HJ) DNA during genetic recombination and DNA repair, while the RuvA-RuvB complex plays an important role in the rescue of blocked DNA replication forks via replication fork reversal (RFR). RuvA specifically binds to HJ cruciform DNA, conferring on it an open structure. The RuvB hexamer acts as an ATP-dependent pump, pulling dsDNA into and through the RuvAB complex. RuvB forms 2 homohexamers on either side of HJ DNA bound by 1 or 2 RuvA tetramers; 4 subunits per hexamer contact DNA at a time. Coordinated motions by a converter formed by DNA-disengaged RuvB subunits stimulates ATP hydrolysis and nucleotide exchange. Immobilization of the converter enables RuvB to convert the ATP-contained energy into a lever motion, pulling 2 nucleotides of DNA out of the RuvA tetramer per ATP hydrolyzed, thus driving DNA branch migration. The RuvB motors rotate together with the DNA substrate, which together with the progressing nucleotide cycle form the mechanistic basis for DNA recombination by continuous HJ branch migration. Branch migration allows RuvC to scan DNA until it finds its consensus sequence, where it cleaves and resolves cruciform DNA. This chain is Holliday junction branch migration complex subunit RuvB, found in Acidothermus cellulolyticus (strain ATCC 43068 / DSM 8971 / 11B).